The primary structure comprises 80 residues: Cell division activator CedA (80 aa).

The protein belongs to the CedA family.

Functionally, activates the cell division inhibited by chromosomal DNA over-replication. This is Cell division activator CedA from Escherichia coli (strain SMS-3-5 / SECEC).